Consider the following 324-residue polypeptide: MFDENSNAAGTTPVASSLAATPNANLVSQVFNVKDSRWLQVEVCREFLRGQCARSDQECKFAHPPPNVDVQQGRVTACYDSIKGRCTRENPKCKYLHPPQHIKDQLLINGRNHLALKNLLSAQLNQTGTPMVNPMMALQQQAAAVNLIPNTPIYPPYYNGMMYPQVLQDPYTAAAVNQVLDSNQEYHSPPTDKKNQQLQTAALLGNVGGLLSAQSAAAFMANSSAAAAAAQQTPSPLLRLQRKRALEEENTNGNDMTSAAAAHTQLLSLAAGAVPMKRPTLDKNGAMLYSPVAQQAQQFNPYLLQTLQGYVPAVSCEYMQPPPF.

C3H1-type zinc fingers lie at residues 38-66 (WLQV…HPPP) and 72-100 (QGRV…HPPQ).

The protein belongs to the muscleblind family. As to expression, expressed in neurons around the pharynx.

The protein localises to the nucleus. Binds to RNA with repeat sequences 5'-CUG-3' and 5'-CCUG-3'. The sequence is that of Muscleblind-like protein (mbl-1) from Caenorhabditis elegans.